A 304-amino-acid chain; its full sequence is uncharacterized protein (304 aa).

Residues M1 to S183 are disordered. Residues P132–S166 show a composition bias toward low complexity. Transmembrane regions (helical) follow at residues L206–V226 and F265–V285.

To M.leprae ML0007.

Its subcellular location is the cell membrane. This is an uncharacterized protein from Mycobacterium tuberculosis (strain ATCC 25618 / H37Rv).